The chain runs to 204 residues: MIGYLEGKILYRQGERIMILAGGVGYEVLLPSVVSASMTKGPGDETGLYIYFHQTEKQPKPVLIGFNSLEEREFFERFISVEAIGPIKAVSALCIPIGEIAAAIENKDSGALRKLKGIGARTADKIIATLRGKMAVFAGEHGGEPAGPAPVEENFHLLVLDVLVNQLGHKAAEAKELINQAIKRNPAISSPEELFDEVYRGETG.

Positions 1–67 (MIGYLEGKIL…QPKPVLIGFN (67 aa)) are domain I. Positions 68 to 145 (SLEEREFFER…VFAGEHGGEP (78 aa)) are domain II. Residues 146–156 (AGPAPVEENFH) form a flexible linker region. The interval 156 to 204 (HLLVLDVLVNQLGHKAAEAKELINQAIKRNPAISSPEELFDEVYRGETG) is domain III.

This sequence belongs to the RuvA family. In terms of assembly, homotetramer. Forms an RuvA(8)-RuvB(12)-Holliday junction (HJ) complex. HJ DNA is sandwiched between 2 RuvA tetramers; dsDNA enters through RuvA and exits via RuvB. An RuvB hexamer assembles on each DNA strand where it exits the tetramer. Each RuvB hexamer is contacted by two RuvA subunits (via domain III) on 2 adjacent RuvB subunits; this complex drives branch migration. In the full resolvosome a probable DNA-RuvA(4)-RuvB(12)-RuvC(2) complex forms which resolves the HJ.

The protein resides in the cytoplasm. Its function is as follows. The RuvA-RuvB-RuvC complex processes Holliday junction (HJ) DNA during genetic recombination and DNA repair, while the RuvA-RuvB complex plays an important role in the rescue of blocked DNA replication forks via replication fork reversal (RFR). RuvA specifically binds to HJ cruciform DNA, conferring on it an open structure. The RuvB hexamer acts as an ATP-dependent pump, pulling dsDNA into and through the RuvAB complex. HJ branch migration allows RuvC to scan DNA until it finds its consensus sequence, where it cleaves and resolves the cruciform DNA. The polypeptide is Holliday junction branch migration complex subunit RuvA (Desulfatibacillum aliphaticivorans).